The sequence spans 1119 residues: Solute carrier family 38 member 10 (1119 aa).

Helical transmembrane passes span 4-24 (AAAS…GVSV), 36-58 (IVLG…MFLV), 84-104 (LVET…YVVI), 120-140 (VGGT…VLPL), 153-173 (FSAM…LSSL), 229-249 (IFAS…FFGY), 272-292 (MLRV…ILPC), 323-343 (ALTL…PNVE), 345-365 (ILGL…PALI), and 378-398 (VVLW…LSVS). Disordered stretches follow at residues 438–691 (AEDG…EEAG) and 731–1071 (KEIH…DGVI). Composition is skewed to basic and acidic residues over residues 439 to 454 (EDGR…REEL), 466 to 475 (PGREDGKEAP), 493 to 522 (EAHR…ENKP), 544 to 559 (DSER…EVGK), and 592 to 603 (AKEDLGPGDRGL). Ser-612 is subject to Phosphoserine. Residues 652–667 (PPLPAEKPAPGPGLPP) are compositionally biased toward pro residues. 3 stretches are compositionally biased toward basic and acidic residues: residues 668 to 677 (EPREQRDVER), 731 to 752 (KEIH…EVHQ), and 763 to 773 (EAPEGKARETV). Thr-772 is modified (phosphothreonine). At Ser-802 the chain carries Phosphoserine. Basic and acidic residues-rich tracts occupy residues 832 to 841 (KLRDGQKDAA) and 863 to 876 (PARE…RLAE). The span at 880–889 (GQSQDVTGGS) shows a compositional bias: polar residues. Phosphoserine is present on residues Ser-889, Ser-965, and Ser-997. Composition is skewed to basic and acidic residues over residues 975-1005 (HRLD…RGGE), 1012-1022 (PRQRPEPELGL), and 1033-1042 (DNAKPNRDLK).

The protein belongs to the amino acid/polyamine transporter 2 family.

The protein localises to the membrane. It catalyses the reaction L-glutamate(out) = L-glutamate(in). It carries out the reaction L-glutamine(out) = L-glutamine(in). The catalysed reaction is L-alanine(in) = L-alanine(out). The enzyme catalyses L-serine(in) = L-serine(out). It catalyses the reaction L-leucine(in) = L-leucine(out). Its function is as follows. Facilitates bidirectional transport of amino acids. May act as a glutamate sensor that regulates glutamate-glutamine cycle and mTOR signaling in the brain. The transport mechanism remains to be elucidated. In Homo sapiens (Human), this protein is Solute carrier family 38 member 10.